The sequence spans 537 residues: Efflux pump ustT (537 aa).

The segment covering 1–25 has biased composition (basic and acidic residues); the sequence is MAKEAQSLHELDNMKEKEVDQEKKA. The disordered stretch occupies residues 1–50; it reads MAKEAQSLHELDNMKEKEVDQEKKAPTSVGDQEEHDDPKKQASHSQNVSE. Asparagine 47 carries an N-linked (GlcNAc...) asparagine glycan. 8 helical membrane passes run 71-91, 104-124, 137-157, 162-182, 193-213, 236-256, 266-286, and 304-324; these read PLAMAVIMVAISMGMFLVSLL, WVYMSLVFIFVIGSAVGAGAM, GIGLGGVLSGSTILIAENAPL, MFLGILMATMSISAIVGPLIG, WCFILNIPIGGAIIAVLFFFV, LGSALLLPAVVCLILALQWAG, IILLFVFGGLLSIGFVVSQML, and FGSFLFSAMTGGAMLVVTYWI. A glycan (N-linked (GlcNAc...) asparagine) is linked at asparagine 333. The next 4 helical transmembrane spans lie at 339–359, 363–383, 397–417, and 430–450; these read AGIRTIALVLSQAVGAIMGGG, LIGYPPPIMMISATFIAVGAG, WIGYQILMGLGLGFGTQQASL, and TAISLIFFGMQLGGSIFVCIG. Asparagine 501 carries N-linked (GlcNAc...) asparagine glycosylation. Residues 507-527 form a helical membrane-spanning segment; sequence TFYVALAAGITSMLSAFLVQW.

This sequence belongs to the major facilitator superfamily. TCR/Tet family.

The protein resides in the cell membrane. Functionally, efflux pump; part of the gene cluster that mediates the biosynthesis of ustilaginoidins, dimeric gamma-naphthopyrones isolated from different fungal species. This is Efflux pump ustT from Ustilaginoidea virens (Rice false smut fungus).